A 155-amino-acid polypeptide reads, in one-letter code: Protein-export protein SecB (155 aa).

It belongs to the SecB family. In terms of assembly, homotetramer, a dimer of dimers. One homotetramer interacts with 1 SecA dimer.

Its subcellular location is the cytoplasm. One of the proteins required for the normal export of preproteins out of the cell cytoplasm. It is a molecular chaperone that binds to a subset of precursor proteins, maintaining them in a translocation-competent state. It also specifically binds to its receptor SecA. This Methylococcus capsulatus (strain ATCC 33009 / NCIMB 11132 / Bath) protein is Protein-export protein SecB.